A 68-amino-acid chain; its full sequence is Putative membrane protein insertion efficiency factor (68 aa).

The protein belongs to the UPF0161 family.

The protein localises to the cell inner membrane. In terms of biological role, could be involved in insertion of integral membrane proteins into the membrane. This is Putative membrane protein insertion efficiency factor from Hydrogenobaculum sp. (strain Y04AAS1).